Reading from the N-terminus, the 143-residue chain is Endoribonuclease YbeY (143 aa).

Positions 106, 110, and 116 each coordinate Zn(2+).

It belongs to the endoribonuclease YbeY family. Requires Zn(2+) as cofactor.

It localises to the cytoplasm. Single strand-specific metallo-endoribonuclease involved in late-stage 70S ribosome quality control and in maturation of the 3' terminus of the 16S rRNA. This Petrotoga mobilis (strain DSM 10674 / SJ95) protein is Endoribonuclease YbeY.